The sequence spans 146 residues: VHLTGEEKSAVTTLWGKVNVEEVGGEALGRLLVVYPWTQRFFESFGDLSSPDAVMGNPKVKAHGKKVLGAFSDGLAHLDNLKGTFAQLSELHCNKLHVDPENFRLLGNVLVCVLAHHFGKEFTPQVQAAYQKVVAGVANALAHKYH.

Val-1 carries the N-acetylvaline modification. One can recognise a Globin domain in the interval 2–146 (HLTGEEKSAV…VANALAHKYH (145 aa)). Thr-12 is modified (phosphothreonine). At Ser-44 the chain carries Phosphoserine. At Lys-59 the chain carries N6-acetyllysine. His-63 provides a ligand contact to heme b. N6-acetyllysine is present on Lys-82. His-92 is a binding site for heme b. Cys-93 bears the S-nitrosocysteine mark. N6-acetyllysine is present on Lys-144.

Belongs to the globin family. Heterotetramer of two alpha chains and two beta chains. In terms of tissue distribution, red blood cells.

Its function is as follows. Involved in oxygen transport from the lung to the various peripheral tissues. In Leontocebus fuscicollis (Brown-mantled tamarin), this protein is Hemoglobin subunit beta (HBB).